The following is a 139-amino-acid chain: Hydrogenase maturation factor HypA (139 aa).

Histidine 2 contributes to the Ni(2+) binding site. The Zn(2+) site is built by cysteine 73, cysteine 76, cysteine 110, and cysteine 113.

This sequence belongs to the HypA/HybF family.

Its function is as follows. Involved in the maturation of [NiFe] hydrogenases. Required for nickel insertion into the metal center of the hydrogenase. This chain is Hydrogenase maturation factor HypA, found in Pyrococcus horikoshii (strain ATCC 700860 / DSM 12428 / JCM 9974 / NBRC 100139 / OT-3).